Here is a 127-residue protein sequence, read N- to C-terminus: MAIWQGRSLRKPSGGRIVLARKKRKRELGREPSNTRVAEQDKRKIIRTYGGNKKVRLTAAAYANVFDKSGKGRKVRIIRVIENPANRQFARRNIITKGAIIETEIGKAKVTSRPGQDGVVNAILLEE.

The protein belongs to the eukaryotic ribosomal protein eS8 family. In terms of assembly, part of the 30S ribosomal subunit.

This chain is Small ribosomal subunit protein eS8 (rps8e), found in Pyrococcus abyssi (strain GE5 / Orsay).